The chain runs to 79 residues: Sec-independent protein translocase protein TatA (79 aa).

Residues 1–21 (MGGWSSPSHWLIILLIVVLLF) traverse the membrane as a helical segment. Residues 49-61 (EVAKNTQKIEENK) show a composition bias toward basic and acidic residues. The disordered stretch occupies residues 49–79 (EVAKNTQKIEENKNTTNNTNADASIDETKKA).

Belongs to the TatA/E family. As to quaternary structure, the Tat system comprises two distinct complexes: a TatABC complex, containing multiple copies of TatA, TatB and TatC subunits, and a separate TatA complex, containing only TatA subunits. Substrates initially bind to the TatABC complex, which probably triggers association of the separate TatA complex to form the active translocon.

The protein resides in the cell inner membrane. In terms of biological role, part of the twin-arginine translocation (Tat) system that transports large folded proteins containing a characteristic twin-arginine motif in their signal peptide across membranes. TatA could form the protein-conducting channel of the Tat system. This Campylobacter jejuni subsp. doylei (strain ATCC BAA-1458 / RM4099 / 269.97) protein is Sec-independent protein translocase protein TatA.